The sequence spans 850 residues: Pre-mRNA-splicing factor SYF1 (850 aa).

HAT repeat units lie at residues 25–57, 58–90, 100–132, 134–168, 171–203, 281–316, 477–509, 511–543, 545–579, 584–618, and 692–726; these read IQPS…FKQG, SPQK…ERTL, NSFE…FLMI, EKIT…FILK, IPSL…KIKE, AQFE…FEDS, KKQN…LEES, GTFH…YLEE, KYFE…KFIQ, MKLE…FEEQ, and GEID…FEKL. The segment covering 761-771 has biased composition (basic and acidic residues); the sequence is NNKDDKDDKNQ. The disordered stretch occupies residues 761-837; it reads NNKDDKDDKN…EEEEEEEDQL (77 aa). The span at 772–792 shows a compositional bias: low complexity; it reads QQKQQQQQQEKQQQQQQQQQQ. A compositionally biased stretch (polar residues) spans 793–812; it reads ASTLTKSKPVTVSLPETIQY. The segment covering 818–836 has biased composition (acidic residues); that stretch reads NDDEINLDDDEEEEEEEDQ.

It belongs to the crooked-neck family. Identified in the spliceosome C complex.

It localises to the nucleus. Involved in pre-mRNA splicing as component of the spliceosome. Involved in transcription-coupled repair (TCR), transcription and pre-mRNA splicing. The protein is Pre-mRNA-splicing factor SYF1 (xab2) of Dictyostelium discoideum (Social amoeba).